The chain runs to 262 residues: Type III pantothenate kinase (262 aa).

6–13 (DVGNTNAV) provides a ligand contact to ATP. Substrate contacts are provided by residues tyrosine 100 and 107-110 (GADR). Aspartate 109 functions as the Proton acceptor in the catalytic mechanism. A K(+)-binding site is contributed by aspartate 129. Threonine 132 is a binding site for ATP. Residue threonine 184 coordinates substrate.

This sequence belongs to the type III pantothenate kinase family. Homodimer. NH4(+) serves as cofactor. Requires K(+) as cofactor.

It localises to the cytoplasm. It carries out the reaction (R)-pantothenate + ATP = (R)-4'-phosphopantothenate + ADP + H(+). It functions in the pathway cofactor biosynthesis; coenzyme A biosynthesis; CoA from (R)-pantothenate: step 1/5. Its function is as follows. Catalyzes the phosphorylation of pantothenate (Pan), the first step in CoA biosynthesis. This Bacillus cereus (strain G9842) protein is Type III pantothenate kinase.